The following is a 374-amino-acid chain: Speckle-type POZ protein (374 aa).

The MATH domain occupies 31–161 (KFSYMWTINN…DDKLTLFCEV (131 aa)). Positions 71-191 (VNPKGLDEES…PECRLADELG (121 aa)) are required for nuclear localization. Positions 123–133 (YRFVQGKDWGF) are important for binding substrate proteins. Residues 173-297 (QNTMNMVKVP…MCEDALCSNL (125 aa)) enclose the BTB domain. 2 important for homodimerization regions span residues 186-217 (LADE…HKAI) and 297-355 (LSVE…AYRS).

This sequence belongs to the Tdpoz family. In terms of assembly, interacts with GLI2 and GLI3. Homodimer and homooligomer. Heterodimer with SPOPL. Each dimer interacts with two CUL3 molecules. Part of cullin-RING-based BCR (BTB-CUL3-RBX1) E3 ubiquitin-protein ligase complexes that contain CUL3 and homodimeric SPOP, or the heterodimer formed by SPOP and SPOPL, plus a target protein, such as MACROH2A1, PDX1/IPF1, BMI1, BRMS1 and DAXX. Interacts with IRF1; this interaction mediates IRF1 proteasomal degradation. Interacts with HNF1A.

The protein resides in the nucleus. The protein localises to the nucleus speckle. The protein operates within protein modification; protein ubiquitination. Its function is as follows. Component of a cullin-RING-based BCR (BTB-CUL3-RBX1) E3 ubiquitin-protein ligase complex that mediates the ubiquitination of target proteins, leading most often to their proteasomal degradation. In complex with CUL3, involved in ubiquitination and proteasomal degradation of BRMS1, DAXX, PDX1/IPF1, GLI2 and GLI3. In complex with CUL3, involved in ubiquitination of MACROH2A1 and BMI1; this does not lead to their proteasomal degradation. Inhibits transcriptional activation of PDX1/IPF1 targets, such as insulin, by promoting PDX1/IPF1 degradation. The cullin-RING-based BCR (BTB-CUL3-RBX1) E3 ubiquitin-protein ligase complex containing homodimeric SPOP has higher ubiquitin ligase activity than the complex that contains the heterodimer formed by SPOP and SPOPL. Involved in the regulation of bromodomain and extra-terminal motif (BET) proteins BRD2, BRD3, BRD4 stability.Plays an essential role for proper translation, but not for their degradation, of critical DNA replication licensing factors CDT1 and CDC6, thereby participating in DNA synthesis and cell proliferation. Regulates interferon regulatory factor 1/IRF1 proteasomal turnover by targeting S/T-rich degrons in IRF1. Involved in ubiquitination of BRDT and promotes its degradation, thereby regulates histone removal in early condensing spermatids prior to histone-to-protamine exchange. This chain is Speckle-type POZ protein (SPOP), found in Bos taurus (Bovine).